Reading from the N-terminus, the 41-residue chain is Large ribosomal subunit protein bL36 (41 aa).

It belongs to the bacterial ribosomal protein bL36 family.

In Granulibacter bethesdensis (strain ATCC BAA-1260 / CGDNIH1), this protein is Large ribosomal subunit protein bL36.